A 257-amino-acid polypeptide reads, in one-letter code: Acetyl-coenzyme A carboxylase carboxyl transferase subunit beta 1 (257 aa).

The region spanning 1–257 (MNINDIFLKR…KMHVNTGGEA (257 aa)) is the CoA carboxyltransferase N-terminal domain.

It belongs to the AccD/PCCB family. Acetyl-CoA carboxylase is a heterohexamer composed of biotin carboxyl carrier protein (AccB), biotin carboxylase (AccC) and two subunits each of ACCase subunit alpha (AccA) and ACCase subunit beta (AccD).

It localises to the cytoplasm. It catalyses the reaction N(6)-carboxybiotinyl-L-lysyl-[protein] + acetyl-CoA = N(6)-biotinyl-L-lysyl-[protein] + malonyl-CoA. It participates in lipid metabolism; malonyl-CoA biosynthesis; malonyl-CoA from acetyl-CoA: step 1/1. In terms of biological role, component of the acetyl coenzyme A carboxylase (ACC) complex. Biotin carboxylase (BC) catalyzes the carboxylation of biotin on its carrier protein (BCCP) and then the CO(2) group is transferred by the transcarboxylase to acetyl-CoA to form malonyl-CoA. The chain is Acetyl-coenzyme A carboxylase carboxyl transferase subunit beta 1 from Lachnospira eligens (strain ATCC 27750 / DSM 3376 / VPI C15-48 / C15-B4) (Eubacterium eligens).